The following is a 142-amino-acid chain: Baculoviral IAP repeat-containing protein 5 (142 aa).

A BIR repeat occupies 18–88; sequence RVSTFKNWPF…KHSSGCAFLS (71 aa). A Phosphoserine; by AURKC modification is found at Ser20. Lys23 bears the N6-acetyllysine mark. The residue at position 34 (Thr34) is a Phosphothreonine; by CDK1 and CDK15. At Thr48 the chain carries Phosphothreonine. Residues Cys57, Cys60, His77, and Cys84 each contribute to the Zn(2+) site. N6-acetyllysine occurs at positions 90, 110, 112, and 115. A Phosphothreonine; by AURKB modification is found at Thr117. Position 129 is an N6-acetyllysine (Lys129).

It belongs to the IAP family. In terms of assembly, monomer or homodimer. Exists as a homodimer in the apo state and as a monomer in the CPC-bound state. The monomer protects cells against apoptosis more efficiently than the dimer. Only the dimeric form is capable of enhancing tubulin stability in cells. When phosphorylated, interacts with LAMTOR5/HBXIP; the resulting complex binds pro-CASP9, as well as active CASP9, but much less efficiently. Component of the chromosomal passenger complex (CPC) composed of at least BIRC5/survivin, CDCA8/borealin, INCENP, AURKB or AURKC; in the complex forms a triple-helix bundle-based subcomplex with INCENP and CDCA8. Interacts with JTB. Interacts (via BIR domain) with histone H3 phosphorylated at 'Thr-3' (H3pT3). Interacts with EVI5. Interacts with GTP-bound RAN in both the S and M phases of the cell cycle. Interacts with USP9X. Interacts with tubulin. Interacts with BIRC2/c-IAP1. The acetylated form at Lys-129 interacts with STAT3. The monomeric form deacetylated at Lys-129 interacts with XPO1/CRM1. The monomeric form interacts with XIAP/BIRC4. Both the dimeric and monomeric form can interact with DIABLO/SMAC. Interacts with BIRC6/bruce. Interacts with FBXL7; this interaction facilitates the polyubiquitination and subsequent proteasomal degradation of BIRC5 by the SCF(FBXL7) E3 ubiquitin-protein ligase complex. Post-translationally, ubiquitinated by the Cul9-RING ubiquitin-protein ligase complex, leading to its degradation. Ubiquitination is required for centrosomal targeting. Deubiquitinated by USP35 or USP38; leading to stabilization. Acetylation at Lys-129 results in its homodimerization, while deacetylation promotes the formation of monomers which heterodimerize with XPO1/CRM1 which facilitates its nuclear export. The acetylated form represses STAT3 transactivation. The dynamic equilibrium between its acetylation and deacetylation at Lys-129 determines its interaction with XPO1/CRM1, its subsequent subcellular localization, and its ability to inhibit STAT3 transactivation. In terms of processing, in vitro phosphorylation at Thr-117 by AURKB prevents interaction with INCENP and localization to mitotic chromosomes. Phosphorylation at Thr-48 by CK2 is critical for its mitotic and anti-apoptotic activities. Phosphorylation at Thr-34 by CDK15 is critical for its anti-apoptotic activity. Phosphorylation at Ser-20 by AURKC is critical for regulation of proper chromosome alignment and segregation, and possibly cytokinesis.

The protein resides in the cytoplasm. The protein localises to the nucleus. It is found in the chromosome. It localises to the centromere. Its subcellular location is the cytoskeleton. The protein resides in the spindle. The protein localises to the kinetochore. It is found in the midbody. Its function is as follows. Multitasking protein that has dual roles in promoting cell proliferation and preventing apoptosis. Component of a chromosome passage protein complex (CPC) which is essential for chromosome alignment and segregation during mitosis and cytokinesis. Acts as an important regulator of the localization of this complex; directs CPC movement to different locations from the inner centromere during prometaphase to midbody during cytokinesis and participates in the organization of the center spindle by associating with polymerized microtubules. Involved in the recruitment of CPC to centromeres during early mitosis via association with histone H3 phosphorylated at 'Thr-3' (H3pT3) during mitosis. The complex with RAN plays a role in mitotic spindle formation by serving as a physical scaffold to help deliver the RAN effector molecule TPX2 to microtubules. May counteract a default induction of apoptosis in G2/M phase. The acetylated form represses STAT3 transactivation of target gene promoters. May play a role in neoplasia. Inhibitor of CASP3 and CASP7. Essential for the maintenance of mitochondrial integrity and function. This Bos taurus (Bovine) protein is Baculoviral IAP repeat-containing protein 5 (BIRC5).